Consider the following 154-residue polypeptide: Large ribosomal subunit protein uL23 (154 aa).

Belongs to the universal ribosomal protein uL23 family.

Its function is as follows. This protein binds to a specific region on the 26S rRNA. This is Large ribosomal subunit protein uL23 (RPL23A) from Fritillaria agrestis (Stinkbells).